The sequence spans 172 residues: uncharacterized protein (172 aa).

Residues methionine 1–alanine 28 show a composition bias toward low complexity. A disordered region spans residues methionine 1 to glycine 172. Over residues proline 58–histidine 68 the composition is skewed to basic residues. Gly residues predominate over residues threonine 80 to arginine 100. The segment covering proline 129–alanine 138 has biased composition (low complexity). Residues proline 139–arginine 165 are compositionally biased toward gly residues.

This is an uncharacterized protein from Homo sapiens (Human).